A 347-amino-acid polypeptide reads, in one-letter code: Dihydroorotase (347 aa).

Zn(2+) is bound by residues His-14 and His-16. Substrate is bound by residues 16–18 and Asn-42; that span reads HLR. Zn(2+)-binding residues include Lys-100, His-137, and His-175. Lys-100 is modified (N6-carboxylysine). His-137 provides a ligand contact to substrate. Leu-220 contacts substrate. Asp-248 is a Zn(2+) binding site. Asp-248 is a catalytic residue. Substrate-binding residues include His-252 and Ala-264.

The protein belongs to the metallo-dependent hydrolases superfamily. DHOase family. Class II DHOase subfamily. Homodimer. Zn(2+) is required as a cofactor.

It carries out the reaction (S)-dihydroorotate + H2O = N-carbamoyl-L-aspartate + H(+). Its pathway is pyrimidine metabolism; UMP biosynthesis via de novo pathway; (S)-dihydroorotate from bicarbonate: step 3/3. In terms of biological role, catalyzes the reversible cyclization of carbamoyl aspartate to dihydroorotate. In Stutzerimonas stutzeri (strain A1501) (Pseudomonas stutzeri), this protein is Dihydroorotase.